The primary structure comprises 229 residues: Glucose-induced degradation protein 8-B homolog (229 aa).

The 33-residue stretch at 26-58 folds into the LisH domain; the sequence is QRADMNRLIMNYLVTEGFKEAAEKFRMESGIEP. One can recognise a CTLH domain in the interval 64–121; that stretch reads SLDERIKIREMVLKGQIQEAIALINSLHPELLDTNRYLYFHLQQQHLIELIRLRETEA.

Identified in the CTLH complex that contains at least MAEA, RMND5A (or alternatively its paralog RMND5B), GID8, WDR26, and RANBP9 and/or RANBP10. Interacts with CTNNB1.

It is found in the cytoplasm. It localises to the nucleus. Its function is as follows. Core component of the CTLH E3 ubiquitin-protein ligase complex that selectively accepts ubiquitin from UBE2H and mediates ubiquitination and subsequent proteasomal degradation of target proteins. Acts as a positive regulator of Wnt signaling pathway by promoting beta-catenin (CTNNB1) nuclear accumulation. Required for normal Wnt signaling and normal dorsoventral patterning during embryogenesis. The protein is Glucose-induced degradation protein 8-B homolog (gid8b) of Danio rerio (Zebrafish).